Consider the following 681-residue polypeptide: Translation factor GUF1 homolog, chloroplastic (681 aa).

A chloroplast-targeting transit peptide spans 1 to 51; the sequence is MAMASAMDLSSPPTFFLSGTSTSSPSLRRLSSISVSGFRRHSNRKLQILCQ. The tr-type G domain maps to 84–265; it reads SNIRNFSIIA…AIVQRIPAPL (182 aa). Residues 93–100, 158–162, and 212–215 contribute to the GTP site; these read AHIDHGKS, DTPGH, and NKID.

It belongs to the TRAFAC class translation factor GTPase superfamily. Classic translation factor GTPase family. LepA subfamily.

It is found in the plastid. The protein resides in the chloroplast. It carries out the reaction GTP + H2O = GDP + phosphate + H(+). In terms of biological role, promotes chloroplast protein synthesis. May act as a fidelity factor of the translation reaction, by catalyzing a one-codon backward translocation of tRNAs on improperly translocated ribosomes. This is Translation factor GUF1 homolog, chloroplastic from Arabidopsis thaliana (Mouse-ear cress).